Reading from the N-terminus, the 188-residue chain is Elongation factor P (188 aa).

It belongs to the elongation factor P family.

It is found in the cytoplasm. It participates in protein biosynthesis; polypeptide chain elongation. Its function is as follows. Involved in peptide bond synthesis. Stimulates efficient translation and peptide-bond synthesis on native or reconstituted 70S ribosomes in vitro. Probably functions indirectly by altering the affinity of the ribosome for aminoacyl-tRNA, thus increasing their reactivity as acceptors for peptidyl transferase. In Cereibacter sphaeroides (strain KD131 / KCTC 12085) (Rhodobacter sphaeroides), this protein is Elongation factor P.